Consider the following 274-residue polypeptide: Aliphatic sulfonates import ATP-binding protein SsuB 2 (274 aa).

The ABC transporter domain occupies 21–235 (VQLRNVVRQF…DSGQAGFQLI (215 aa)). 53–60 (GASGSGKT) lines the ATP pocket.

This sequence belongs to the ABC transporter superfamily. Aliphatic sulfonates importer (TC 3.A.1.17.2) family. As to quaternary structure, the complex is composed of two ATP-binding proteins (SsuB), two transmembrane proteins (SsuC) and a solute-binding protein (SsuA).

It is found in the cell inner membrane. The catalysed reaction is ATP + H2O + aliphatic sulfonate-[sulfonate-binding protein]Side 1 = ADP + phosphate + aliphatic sulfonateSide 2 + [sulfonate-binding protein]Side 1.. Its function is as follows. Part of the ABC transporter complex SsuABC involved in aliphatic sulfonates import. Responsible for energy coupling to the transport system. This is Aliphatic sulfonates import ATP-binding protein SsuB 2 from Pseudomonas syringae pv. syringae (strain B728a).